Consider the following 387-residue polypeptide: Formate-dependent phosphoribosylglycinamide formyltransferase (387 aa).

N(1)-(5-phospho-beta-D-ribosyl)glycinamide contacts are provided by residues 12–13 (EL) and Glu-72. ATP contacts are provided by residues Arg-104, Lys-145, 150–155 (SSGKGQ), 185–188 (EEFI), and Glu-193. The ATP-grasp domain maps to 109–300 (DLAARELGLA…EFELHLRAVL (192 aa)). Residues Glu-258 and Glu-270 each contribute to the Mg(2+) site. Residues Asp-277, Lys-347, and 354–355 (RR) contribute to the N(1)-(5-phospho-beta-D-ribosyl)glycinamide site.

The protein belongs to the PurK/PurT family. In terms of assembly, homodimer.

It catalyses the reaction N(1)-(5-phospho-beta-D-ribosyl)glycinamide + formate + ATP = N(2)-formyl-N(1)-(5-phospho-beta-D-ribosyl)glycinamide + ADP + phosphate + H(+). Its pathway is purine metabolism; IMP biosynthesis via de novo pathway; N(2)-formyl-N(1)-(5-phospho-D-ribosyl)glycinamide from N(1)-(5-phospho-D-ribosyl)glycinamide (formate route): step 1/1. Its function is as follows. Involved in the de novo purine biosynthesis. Catalyzes the transfer of formate to 5-phospho-ribosyl-glycinamide (GAR), producing 5-phospho-ribosyl-N-formylglycinamide (FGAR). Formate is provided by PurU via hydrolysis of 10-formyl-tetrahydrofolate. This chain is Formate-dependent phosphoribosylglycinamide formyltransferase, found in Anaeromyxobacter dehalogenans (strain 2CP-C).